Here is a 515-residue protein sequence, read N- to C-terminus: Vesicular acetylcholine transporter (515 aa).

Residues 1–40 are Cytoplasmic-facing; sequence MGVTMAVGLAKAAMGKISSAIGERSKRISGAMNEPRRKRK. The helical transmembrane segment at 41–61 threads the bilayer; it reads ILLVIVCIAMLLDNMLYMVIV. Over 62–112 the chain is Lumenal, vesicle; the sequence is PIIPNYLETIRTYKLVYITTPSNGTNGSLLNSTQRAVLERNPNANEDIQIG. N-linked (GlcNAc...) asparagine glycans are attached at residues asparagine 84, asparagine 87, and asparagine 92. The chain crosses the membrane as a helical span at residues 113 to 133; sequence VLFASKAILQLLSNPFTGTFI. Residues 134-139 lie on the Cytoplasmic side of the membrane; the sequence is DRVGYD. A helical membrane pass occupies residues 140–160; it reads IPLLIGLTIMFFSTITFAFGE. The Lumenal, vesicle portion of the chain corresponds to 161–169; it reads SYAVLFAAR. A helical transmembrane segment spans residues 170–190; the sequence is SLQGLGSAFADTSGIAMIADK. Residues 191-201 are Cytoplasmic-facing; it reads YTEESERTQAL. The chain crosses the membrane as a helical span at residues 202-222; the sequence is GIALAFISFGSLVAPPFGGVL. At 223 to 229 the chain is on the lumenal, vesicle side; sequence YQFAGKW. The helical transmembrane segment at 230–250 threads the bilayer; sequence VPFLVLSFVCLLDGILLLMVV. Over 251 to 271 the chain is Cytoplasmic; sequence TPFASRTRENMLQGTPIYKLM. A helical transmembrane segment spans residues 272–292; that stretch reads IDPYIAVVAGALTTCNIPLAF. Residues 293–310 lie on the Lumenal, vesicle side of the membrane; the sequence is LEPTISNWMKKTMNASEW. Asparagine 306 carries an N-linked (GlcNAc...) asparagine glycan. Residues 311 to 331 form a helical membrane-spanning segment; it reads QMGITWLPAFFPHILGVYITV. The Cytoplasmic portion of the chain corresponds to 332-341; that stretch reads KLAAKYPNYQ. The chain crosses the membrane as a helical span at residues 342-362; sequence WFYGAVGLVIIGASSCTIPAC. At 363–367 the chain is on the lumenal, vesicle side; sequence RNFEE. A helical transmembrane segment spans residues 368 to 388; that stretch reads LIIPLCALCFGIALVDTALLP. At 389–404 the chain is on the cytoplasmic side; that stretch reads TLAFLVDIRYVSVYGS. A helical membrane pass occupies residues 405 to 425; it reads VYAIADISYSVAYALGPIMAG. The Lumenal, vesicle segment spans residues 426-432; that stretch reads QIVHDLG. Residues 433–453 traverse the membrane as a helical segment; it reads FVQLNLGMGLVNILYAPALLF. Residues 454–515 are Cytoplasmic-facing; it reads LRNVCQMKPS…VLSDQEGYSE (62 aa). The tract at residues 489-515 is disordered; sequence AAKEPHGSSSGNHSVHAVLSDQEGYSE.

The protein belongs to the major facilitator superfamily. Vesicular transporter family. In terms of tissue distribution, electric lobe.

The protein localises to the membrane. In terms of biological role, involved in acetylcholine transport into synaptic vesicles. The chain is Vesicular acetylcholine transporter from Tetronarce californica (Pacific electric ray).